The chain runs to 449 residues: Streptomycin-6-phosphate phosphatase (449 aa).

Residues 1–32 (MRFAYGRLPWRRGAVLGSALLVLVTAPAASTA) form the signal peptide. Asp-50 contributes to the Mg(2+) binding site. Residue Asp-50 coordinates Zn(2+). The active-site Phosphoserine intermediate is the Ser-99. Residues Asp-151 and Thr-153 each contribute to the Mg(2+) site. Positions 268-290 (APGGTAPQRCATRNPGRPAGTPD) are disordered. Position 321 (Glu-321) interacts with Mg(2+). Asp-326, His-330, Asp-368, His-369, and His-412 together coordinate Zn(2+).

Belongs to the alkaline phosphatase family. Mg(2+) serves as cofactor. Requires Zn(2+) as cofactor.

Its subcellular location is the secreted. It carries out the reaction streptomycin 6-phosphate + H2O = streptomycin + phosphate. It participates in antibiotic biosynthesis; streptomycin biosynthesis. In terms of biological role, specifically cleaves both streptomycin-6-phosphate and, more slowly, streptomycin-3''-phosphate during the biosynthesis of streptomycin. In Streptomyces griseus, this protein is Streptomycin-6-phosphate phosphatase (strK).